Reading from the N-terminus, the 287-residue chain is Ribosomal RNA small subunit methyltransferase I (287 aa).

This sequence belongs to the methyltransferase superfamily. RsmI family.

It is found in the cytoplasm. It carries out the reaction cytidine(1402) in 16S rRNA + S-adenosyl-L-methionine = 2'-O-methylcytidine(1402) in 16S rRNA + S-adenosyl-L-homocysteine + H(+). Catalyzes the 2'-O-methylation of the ribose of cytidine 1402 (C1402) in 16S rRNA. This Streptococcus pyogenes serotype M18 (strain MGAS8232) protein is Ribosomal RNA small subunit methyltransferase I.